The chain runs to 299 residues: Tyrosine recombinase XerC (299 aa).

The Core-binding (CB) domain maps to 1–85; it reads MEQHLDAYCM…AVRGFYKYLN (85 aa). Positions 106–285 constitute a Tyr recombinase domain; sequence RLPKTLDTDR…DFQHLATVYD (180 aa). Residues arginine 146, lysine 170, histidine 237, arginine 240, and histidine 263 contribute to the active site. The active-site O-(3'-phospho-DNA)-tyrosine intermediate is the tyrosine 272.

It belongs to the 'phage' integrase family. XerC subfamily. As to quaternary structure, forms a cyclic heterotetrameric complex composed of two molecules of XerC and two molecules of XerD.

It is found in the cytoplasm. In terms of biological role, site-specific tyrosine recombinase, which acts by catalyzing the cutting and rejoining of the recombining DNA molecules. The XerC-XerD complex is essential to convert dimers of the bacterial chromosome into monomers to permit their segregation at cell division. It also contributes to the segregational stability of plasmids. The polypeptide is Tyrosine recombinase XerC (Pseudomonas savastanoi pv. phaseolicola (strain 1448A / Race 6) (Pseudomonas syringae pv. phaseolicola (strain 1448A / Race 6))).